The primary structure comprises 674 residues: MKISDLGYDESFLDLFEGNDFELYDHQRMAIEQFRKGKNIMVSVPTAAGKTLIAYSAIYETFKKKLKSIYIVPLRSLAMEKYEELSRLRELGMRVKLSIGNYDDTPDFIKRYDVVILTSEKADSLMHHDPYMMEEVGLMVIDEIHMIGDEYRGPTLETVITTARYVNPETRIIALSATVSNASEIAEWLNASLIKSSFRPVPLKVGILYRNRLFLDGDARSDVDINLLVKETVDDGGQVLIFVSSRKRAEDMAKNLSQLFDPINDLKVSSEDANVYDDLLNEMLPHGVSFHHAGLSNEQRSFIEKAFRHRKLKVIVATPTLAAGVNLPARLVIVKDVTRYGDLGITYLSNMEVKQMIGRAGRPGYDQYGIGIIYAASANSYQVVKEYISEEPEPVDSYIGKPEKVRFNTLAAIAMGLATSQVEMEEFYRSTFYYAQNGEDEIPNRINESIKFLKENGFIKEKDSLRATEFGKMISNLYIDPESAIILKKYFDDNDDIDTALYYISLCREIAPINMQDDYAAMEFLESIGHIDGDIEAAKTALVLREWISEASTRRIFEMYGVAPGDLQARVNNADWISYSLAHLASIFKPERRRKLEILNMRIKEGIREELMDLVLIPAIGRVRARRLYEAGIHNVQELAFSDPSRIKMLYGFSDTLANAVVKRAKAIVSERIR.

ATP-binding positions include Gln-27 and 44–51 (VPTAAGKT). The Helicase ATP-binding domain occupies 31–197 (IEQFRKGKNI…WLNASLIKSS (167 aa)). A DEAH box motif is present at residues 142 to 145 (DEIH). One can recognise a Helicase C-terminal domain in the interval 224–411 (DINLLVKETV…PEKVRFNTLA (188 aa)).

Belongs to the helicase family. Hel308 subfamily. In terms of assembly, monomer.

It catalyses the reaction Couples ATP hydrolysis with the unwinding of duplex DNA by translocating in the 3'-5' direction.. The catalysed reaction is ATP + H2O = ADP + phosphate + H(+). Its function is as follows. DNA-dependent ATPase and 3'-5' DNA helicase that may be involved in repair of stalled replication forks. This is ATP-dependent DNA helicase Hel308 from Thermoplasma volcanium (strain ATCC 51530 / DSM 4299 / JCM 9571 / NBRC 15438 / GSS1).